A 183-amino-acid polypeptide reads, in one-letter code: ATP synthase subunit b, chloroplastic (183 aa).

The helical transmembrane segment at 25-45 (DILATNLINLTVVVGVLIFFG) threads the bilayer.

It belongs to the ATPase B chain family. F-type ATPases have 2 components, F(1) - the catalytic core - and F(0) - the membrane proton channel. F(1) has five subunits: alpha(3), beta(3), gamma(1), delta(1), epsilon(1). F(0) has four main subunits: a(1), b(1), b'(1) and c(10-14). The alpha and beta chains form an alternating ring which encloses part of the gamma chain. F(1) is attached to F(0) by a central stalk formed by the gamma and epsilon chains, while a peripheral stalk is formed by the delta, b and b' chains.

It is found in the plastid. It localises to the chloroplast thylakoid membrane. Its function is as follows. F(1)F(0) ATP synthase produces ATP from ADP in the presence of a proton or sodium gradient. F-type ATPases consist of two structural domains, F(1) containing the extramembraneous catalytic core and F(0) containing the membrane proton channel, linked together by a central stalk and a peripheral stalk. During catalysis, ATP synthesis in the catalytic domain of F(1) is coupled via a rotary mechanism of the central stalk subunits to proton translocation. Functionally, component of the F(0) channel, it forms part of the peripheral stalk, linking F(1) to F(0). The protein is ATP synthase subunit b, chloroplastic of Zea mays (Maize).